The sequence spans 346 residues: MHLMEFPREVILGKNLVPEVNNVIKRLKLESPGLVVYGPVTKKIAGESVKKAIRDEFDVYSITVKKAHIGEVEKVEAKIRDYNIKWAIAVGGGSIIDVTKLASYRSGIPFISFPTTASHDGIASANASIRGIEAKTSIKARPPIAVIADIEVIKTAPRRYLAAGVGDVISNITAVRDWKLAHKLKGEYFSEYAAALSLMSAKMVIRDAEIIRLGNDEGVRKVIKALISSGVAMSIAGSSRPASGAEHLFSHALDLLLDKPALHGEQTGIGTIIMAYLHGINWRKIKETLKTVGAPTSAYELGIDPEIIIEALTIAHKIRPERYTILGKEGLTREAAEKAAKITGVI.

NAD(+) is bound by residues 93 to 97 (GSIID) and 115 to 118 (TTAS). Substrate is bound at residue aspartate 120. Serine 124 lines the NAD(+) pocket. Position 167 (aspartate 167) interacts with substrate. Zn(2+) is bound by residues aspartate 167 and histidine 247. Histidine 251 contributes to the substrate binding site. Histidine 263 is a Zn(2+) binding site.

This sequence belongs to the glycerol-1-phosphate dehydrogenase family. Requires Zn(2+) as cofactor.

It is found in the cytoplasm. It catalyses the reaction sn-glycerol 1-phosphate + NAD(+) = dihydroxyacetone phosphate + NADH + H(+). The catalysed reaction is sn-glycerol 1-phosphate + NADP(+) = dihydroxyacetone phosphate + NADPH + H(+). It participates in membrane lipid metabolism; glycerophospholipid metabolism. Its function is as follows. Catalyzes the NAD(P)H-dependent reduction of dihydroxyacetonephosphate (DHAP or glycerone phosphate) to glycerol 1-phosphate (G1P). The G1P thus generated is used as the glycerophosphate backbone of phospholipids in the cellular membranes of Archaea. The chain is Glycerol-1-phosphate dehydrogenase [NAD(P)+] from Pyrococcus abyssi (strain GE5 / Orsay).